The following is a 394-amino-acid chain: Elongation factor Tu 2 (394 aa).

The tr-type G domain maps to 10 to 204 (KPHVNVGTIG…ALDSYIPEPE (195 aa)). The interval 19 to 26 (GHVDHGKT) is G1. 19–26 (GHVDHGKT) lines the GTP pocket. Mg(2+) is bound at residue threonine 26. Residues 60–64 (GITIN) are G2. Positions 81 to 84 (DCPG) are G3. Residues 81-85 (DCPGH) and 136-139 (NKCD) contribute to the GTP site. Residues 136–139 (NKCD) form a G4 region. The segment at 174–176 (SAL) is G5.

The protein belongs to the TRAFAC class translation factor GTPase superfamily. Classic translation factor GTPase family. EF-Tu/EF-1A subfamily. In terms of assembly, monomer.

Its subcellular location is the cytoplasm. It carries out the reaction GTP + H2O = GDP + phosphate + H(+). GTP hydrolase that promotes the GTP-dependent binding of aminoacyl-tRNA to the A-site of ribosomes during protein biosynthesis. In Shewanella oneidensis (strain ATCC 700550 / JCM 31522 / CIP 106686 / LMG 19005 / NCIMB 14063 / MR-1), this protein is Elongation factor Tu 2.